The sequence spans 306 residues: Type 2A encapsulin shell protein SrpI (306 aa).

It belongs to the encapsulin family. Family 2A subfamily. The 24.5 nm encapsulin nanocompartment is formed by 60 subunits; monomers form pentamers which assemble to form shells. There are 12 positively charged pores where the pentamers meet with a minimal pore diameter of 3.7 Angstroms as well 3-fold axis channels and dimer channels.

Its subcellular location is the encapsulin nanocompartment. In terms of biological role, shell component of a type 2A encapsulin nanocompartment. Expression in E.coli generates nanocompartments with an average diameter of 25 nm. They can be disassembled by treatment with 6M guanidine hydrochloride and reassembled with cargo. The nanocompartment is probably involved in sulfur metabolism. Probably allows passage of cysteine into its interior; during growth in light the physiological pH is 8-8.4, about 30-54% of free cysteine (charge -1) would be able to pass through the shell. In Synechococcus elongatus (strain ATCC 33912 / PCC 7942 / FACHB-805) (Anacystis nidulans R2), this protein is Type 2A encapsulin shell protein SrpI.